Consider the following 232-residue polypeptide: MFQFCLLILLLAPGRFFSALGKPQETLTVENREGSDSKAIPTCREASFCAFLQINPIDSNLDVLPTCTCTGGTTCSHSWDPNDGKSITEGHRQFKFCSNVLDTIKHECSAEEKALTGIFEEDKVTKIHLAYYGFLHCICPDHSDYPENSYNETETVEGDKKIITEYYHCEQFKTCKSDDTCHALAIGETKKIYYKDCNCPEGQTCPFELNSAYKTEYKETTDKFTTYSMRCQ.

An N-terminal signal peptide occupies residues 1–21; sequence MFQFCLLILLLAPGRFFSALG.

Belongs to the scoloptoxin-11 family. Post-translationally, contains 8 disulfide bonds. As to expression, expressed by the venom gland.

The protein resides in the secreted. In Scolopendra alternans (Florida Keys giant centipede), this protein is U-scoloptoxin(11)-Sa3a.